A 158-amino-acid polypeptide reads, in one-letter code: ABA-responsive protein ABR18 (158 aa).

Belongs to the BetVI family.

The sequence is that of ABA-responsive protein ABR18 from Pisum sativum (Garden pea).